Consider the following 417-residue polypeptide: S-adenosylmethionine synthase (417 aa).

Position 16 (His16) interacts with ATP. A Mg(2+)-binding site is contributed by Asp18. Residue Glu44 participates in K(+) binding. L-methionine is bound by residues Glu57 and Gln100. Residues 100 to 110 (QSPDIAQGVTS) are flexible loop. ATP is bound by residues 175–177 (DGK), 251–252 (KF), Asp260, 266–267 (RK), Ala283, and Lys287. Asp260 provides a ligand contact to L-methionine. L-methionine is bound at residue Lys291.

This sequence belongs to the AdoMet synthase family. In terms of assembly, homotetramer; dimer of dimers. Mg(2+) is required as a cofactor. K(+) serves as cofactor.

It localises to the cytoplasm. The enzyme catalyses L-methionine + ATP + H2O = S-adenosyl-L-methionine + phosphate + diphosphate. Its pathway is amino-acid biosynthesis; S-adenosyl-L-methionine biosynthesis; S-adenosyl-L-methionine from L-methionine: step 1/1. Its function is as follows. Catalyzes the formation of S-adenosylmethionine (AdoMet) from methionine and ATP. The overall synthetic reaction is composed of two sequential steps, AdoMet formation and the subsequent tripolyphosphate hydrolysis which occurs prior to release of AdoMet from the enzyme. The chain is S-adenosylmethionine synthase from Picosynechococcus sp. (strain ATCC 27264 / PCC 7002 / PR-6) (Agmenellum quadruplicatum).